Consider the following 430-residue polypeptide: MIQTLVNFFRTKEVRNKIFFTLAMLVIFKIGTYIPAPGVNPAAFDNPQGSQGATELLNTFGGGALKRFSIFAMGIVPYITASIVMQLLQMDIVPKFSEWAKQGEVGRRKLNNVTRYLAISLAFIQSIGMAFQFNNYLKGALIINQSIMSYLLIALVLTAGTAFLIWLGDQITQFGVGNGISIIIFAGILSTLPASLIQFGQTAFVGQEDTSLAWLKVLGLLVSLILLTVGAIYVLEAVRKIPIQYAKKQTAQRLGSQATYLPLKVNSAGVIPVIFAMAFFLLPRTLTLFYPDKEWAQNIANAANPSSNVGMVVYIVLIILFTYFYAFVQVNPEKMADNLKKQGSYVPGIRPGEQTKKYITKVLYRLTFVGSIFLAVISILPILATKFMGLPQSIQIGGTSLLIVIGVAIETMKSLEAQVSQKEYKGFGGR.

The next 10 helical transmembrane spans lie at 18-38 (IFFT…PAPG), 68-88 (FSIF…MQLL), 117-137 (LAIS…NNYL), 147-167 (IMSY…LIWL), 179-199 (GISI…LIQF), 217-237 (VLGL…VLEA), 269-289 (GVIP…LTLF), 308-328 (NVGM…YAFV), 368-388 (FVGS…TKFM), and 389-409 (GLPQ…GVAI).

Belongs to the SecY/SEC61-alpha family. Component of the Sec protein translocase complex. Heterotrimer consisting of SecY, SecE and SecG subunits. The heterotrimers can form oligomers, although 1 heterotrimer is thought to be able to translocate proteins. Interacts with the ribosome. Interacts with SecDF, and other proteins may be involved. Interacts with SecA.

Its subcellular location is the cell membrane. In terms of biological role, the central subunit of the protein translocation channel SecYEG. Consists of two halves formed by TMs 1-5 and 6-10. These two domains form a lateral gate at the front which open onto the bilayer between TMs 2 and 7, and are clamped together by SecE at the back. The channel is closed by both a pore ring composed of hydrophobic SecY resides and a short helix (helix 2A) on the extracellular side of the membrane which forms a plug. The plug probably moves laterally to allow the channel to open. The ring and the pore may move independently. The sequence is that of Protein translocase subunit SecY from Staphylococcus aureus (strain NCTC 8325 / PS 47).